We begin with the raw amino-acid sequence, 286 residues long: ATP synthase gamma chain (286 aa).

It belongs to the ATPase gamma chain family. In terms of assembly, F-type ATPases have 2 components, CF(1) - the catalytic core - and CF(0) - the membrane proton channel. CF(1) has five subunits: alpha(3), beta(3), gamma(1), delta(1), epsilon(1). CF(0) has three main subunits: a, b and c.

The protein localises to the cell inner membrane. Its function is as follows. Produces ATP from ADP in the presence of a proton gradient across the membrane. The gamma chain is believed to be important in regulating ATPase activity and the flow of protons through the CF(0) complex. The polypeptide is ATP synthase gamma chain (Pseudoalteromonas translucida (strain TAC 125)).